A 78-amino-acid chain; its full sequence is Protein DsvD (78 aa).

To A.fulgidus DsrD.

May play an essential role in dissimilatory sulfite reduction. The protein is Protein DsvD (dsvD) of Nitratidesulfovibrio vulgaris (strain ATCC 29579 / DSM 644 / CCUG 34227 / NCIMB 8303 / VKM B-1760 / Hildenborough) (Desulfovibrio vulgaris).